A 129-amino-acid chain; its full sequence is Small ribosomal subunit protein uS11 (129 aa).

This sequence belongs to the universal ribosomal protein uS11 family. Part of the 30S ribosomal subunit. Interacts with proteins S7 and S18. Binds to IF-3.

Functionally, located on the platform of the 30S subunit, it bridges several disparate RNA helices of the 16S rRNA. Forms part of the Shine-Dalgarno cleft in the 70S ribosome. The polypeptide is Small ribosomal subunit protein uS11 (Sodalis glossinidius (strain morsitans)).